The chain runs to 79 residues: MELEAMTRYTSPVNPAVFPHLTVVLLAIGMFFKAWFFVYEVTSTKYTRDVYKELLIALVASLFMGFGVHFLLLWVGIFV.

Transmembrane regions (helical) follow at residues 17–37 (VFPH…AWFF) and 59–79 (VASL…GIFV).

It belongs to the OST5 family. In terms of assembly, component of the oligosaccharyltransferase (OST) complex.

It is found in the membrane. Its subcellular location is the endoplasmic reticulum. The protein localises to the cytoplasm. The protein operates within protein modification; protein glycosylation. In terms of biological role, subunit of the oligosaccharyl transferase (OST) complex that catalyzes the initial transfer of a defined glycan (Glc(3)Man(9)GlcNAc(2) in eukaryotes) from the lipid carrier dolichol-pyrophosphate to an asparagine residue within an Asn-X-Ser/Thr consensus motif in nascent polypeptide chains, the first step in protein N-glycosylation. N-glycosylation occurs cotranslationally and the complex associates with the Sec61 complex at the channel-forming translocon complex that mediates protein translocation across the endoplasmic reticulum (ER). All subunits are required for a maximal enzyme activity. The polypeptide is Dolichyl-diphosphooligosaccharide--protein glycosyltransferase subunit TMEM258 (Danio rerio (Zebrafish)).